Reading from the N-terminus, the 515-residue chain is Synaptic vesicular amine transporter (515 aa).

Over 1-20 the chain is Cytoplasmic; the sequence is MALSDLVLLRWLRDSRHSRK. Residues 21-41 form a helical membrane-spanning segment; it reads LILFIVFLALLLDNMLLTVVV. At 42–130 the chain is on the lumenal, vesicle side; the sequence is PIIPSYLYSI…EDRDLLNENV (89 aa). N-linked (GlcNAc...) asparagine glycosylation is found at Asn-56, Asn-80, Asn-81, Asn-89, and Asn-111. Cys-118 and Cys-325 form a disulfide bridge. A helical transmembrane segment spans residues 131–151; it reads QVGLLFASKATVQLLTNPFIG. At 152 to 160 the chain is on the cytoplasmic side; sequence LLTNRIGYP. Residues 161-181 traverse the membrane as a helical segment; the sequence is IPMFAGFCIMFISTVMFAFSS. Residues 182-190 lie on the Lumenal, vesicle side of the membrane; the sequence is SYAFLLIAR. The helical transmembrane segment at 191-211 threads the bilayer; that stretch reads SLQGIGSSCSSVAGMGMLASV. Topologically, residues 212 to 220 are cytoplasmic; the sequence is YTDDEERGK. The chain crosses the membrane as a helical span at residues 221 to 243; it reads PMGIALGGLAMGVLVGPPFGSVL. Serotonin-binding residues include Leu-229 and Val-233. Topologically, residues 244-249 are lumenal, vesicle; the sequence is YEFVGK. Residues 250–272 traverse the membrane as a helical segment; that stretch reads TAPFLVLAALVLLDGAIQLFVLQ. The Cytoplasmic portion of the chain corresponds to 273 to 292; sequence PSRVQPESQKGTPLTTLLKD. A helical transmembrane segment spans residues 293-312; sequence PYILIAAGSICFANMGIAML. Serotonin is bound by residues Asn-306, Ile-309, Glu-313, Phe-335, and Tyr-342. The Lumenal, vesicle segment spans residues 313 to 329; the sequence is EPALPIWMMETMCSRKW. A helical membrane pass occupies residues 330–353; that stretch reads QLGVAFLPASISYLIGTNIFGILA. The Cytoplasmic segment spans residues 354–358; the sequence is HKMGR. A helical membrane pass occupies residues 359–379; sequence WLCALLGMVIVGISILCIPFA. The Lumenal, vesicle segment spans residues 380–390; sequence KNIYGLIAPNF. The chain crosses the membrane as a helical span at residues 391-411; the sequence is GVGFAIGMVDSSMMPIMGYLV. Serotonin is bound at residue Asp-400. Residues 412-415 lie on the Cytoplasmic side of the membrane; the sequence is DLRH. Residues 416 to 436 form a helical membrane-spanning segment; sequence VSVYGSVYAIADVAFCMGYAI. A serotonin-binding site is contributed by Tyr-434. Over 437–441 the chain is Lumenal, vesicle; it reads GPSAG. The chain crosses the membrane as a helical span at residues 442–463; sequence GAIAKAIGFPWLMTIIGIIDIA. The Cytoplasmic portion of the chain corresponds to 464-515; that stretch reads FAPLCFFLRSPPAKEEKMAILMDHNCPIKRKMYTQNNVQSYPIGDDEESESD. Phosphoserine; by CK2 occurs at positions 512 and 514.

Belongs to the major facilitator superfamily. Vesicular transporter family. As to quaternary structure, interacts with SLC6A3. Expressed in the substantia nigra and the tuberomammillary nucleus of the posterior hypothalamus. Expressed in stomach, in particular in varicose nerve fibers and enterochromaffin-like cells in the corpus region (at protein level).

It localises to the cytoplasmic vesicle. The protein localises to the secretory vesicle. It is found in the synaptic vesicle membrane. The protein resides in the secretory vesicle membrane. Its subcellular location is the cell projection. It localises to the axon. The protein localises to the dendrite. It carries out the reaction serotonin(in) + 2 H(+)(out) = serotonin(out) + 2 H(+)(in). It catalyses the reaction dopamine(in) + 2 H(+)(out) = dopamine(out) + 2 H(+)(in). The catalysed reaction is histamine(in) + 2 H(+)(out) = histamine(out) + 2 H(+)(in). Strongly inhibited by reserpine and tetrabenazine. Also inhibited to a lesser extent by ketanserin and fenfluramine. Reserpine and ketanserin inhibit by blocking the substrate-binding pocket. Tetrabenazine traps SLC18A2/VMAT2 in an occluded conformation and its inhibition is specific to SLC18A2/VMAT2 but not SLC18A1/VMAT1. Electrogenic antiporter that exchanges one cationic monoamine with two intravesicular protons across the membrane of secretory and synaptic vesicles. Uses the electrochemical proton gradient established by the V-type proton-pump ATPase to accumulate high concentrations of monoamines inside the vesicles prior to their release via exocytosis. Transports a variety of catecholamines such as dopamine, adrenaline and noradrenaline, histamine, and indolamines such as serotonin. Regulates the transvesicular monoaminergic gradient that determines the quantal size. Mediates somatodendritic dopamine release in hippocampal neurons, likely as part of a regulated secretory pathway that integrates retrograde synaptic signals. Acts as a primary transporter for striatal dopamine loading ensuring impulse-dependent release of dopamine at the synaptic cleft. Responsible for histamine and serotonin storage and subsequent corelease from mast cell granules. This chain is Synaptic vesicular amine transporter (Slc18a2), found in Rattus norvegicus (Rat).